A 440-amino-acid chain; its full sequence is MGDLELLLPGEAEVLVRGLRSFPLREMGSEGWNQQHENLEKLNMQAILDATVSQGEPIQELLVTHGKVPTLVEELIAVEMWKQKVFPVFCRVEDFKPQNTFPIYMVVHHEASIINLLETVFFHKEVCESAEDTVLDLVDYCHRKLTLLVAQSGCGGPPEGEGSQDSNPMQELQKQAELMEFEIALKALSVLRYITDCVDSLSLSTLSRMLSTHNLPCLLVELLEHSPWSRREGGKLQQFEGSRWHTVAPSEQQKLSKLDGQVWIALYNLLLSPEAQARYCLTSFAKGRLLKLRAFLTDTLLDQLPNLAHLQSFLAHLTLTETQPPKKDLVLEQIPEIWERLERENRGKWQAIAKHQLQHVFSPSEQDLRLQARRWAETYRLDVLEAVAPERPRCAYCSAEASKRCSRCQNEWYCCRECQVKHWEKHGKTCVLAAQGDRAK.

Residues 366 to 440 form an interaction with DNAAF11 region; that stretch reads QDLRLQARRW…VLAAQGDRAK (75 aa). The Zn(2+) site is built by cysteine 394, cysteine 397, cysteine 405, cysteine 408, cysteine 414, cysteine 418, histidine 426, and cysteine 430. The MYND-type zinc finger occupies 394-430; sequence CAYCSAEASKRCSRCQNEWYCCRECQVKHWEKHGKTC.

The protein belongs to the ZMYND10 family. Interacts (via C-terminus) with DNAAF11 (via CS domain); this interaction stabilizes DNAAF11 at the protein level. Interacts (via C-terminus) with DNAL1; this interaction stabilizes DNAL1 at the protein level. Interacts with DNAAF4, HSPA8, IQUB, RUVBL2 and DYNTL5.

Its subcellular location is the cytoplasm. It localises to the cytoskeleton. It is found in the microtubule organizing center. The protein resides in the centrosome. The protein localises to the centriolar satellite. Its subcellular location is the apical cell membrane. It localises to the dynein axonemal particle. Plays a role in axonemal structure organization and motility. Involved in axonemal pre-assembly of inner and outer dynein arms (IDA and ODA, respectively) for proper axoneme building for cilia motility. May act by indirectly regulating transcription of dynein proteins. This is Zinc finger MYND domain-containing protein 10 from Homo sapiens (Human).